Reading from the N-terminus, the 286-residue chain is Zinc finger protein ZAT5 (286 aa).

3 disordered regions span residues 1-28, 40-60, and 131-171; these read MMMG…RSSS, STSS…EYNS, and GGHR…FKVS. The C2H2-type 1 zinc finger occupies 115-137; the sequence is YECKTCNRTFSSFQALGGHRASH. A compositionally biased stretch (polar residues) spans 154-171; that stretch reads QPKSSASEEGQNSHFKVS. The segment at 190–212 adopts a C2H2-type 2 zinc-finger fold; the sequence is HECSICGSEFTSGQALGGHMRRH.

Expressed in flowers and siliques.

It localises to the nucleus. Probable transcription factor that may be involved in stress responses. The sequence is that of Zinc finger protein ZAT5 (ZAT5) from Arabidopsis thaliana (Mouse-ear cress).